We begin with the raw amino-acid sequence, 465 residues long: Gamma-aminobutyric acid receptor subunit rho-2 (465 aa).

Positions 1-20 are cleaved as a signal peptide; it reads MPYFMRLALFLFCLMALVES. The Extracellular segment spans residues 21-260; it reads RKPRRKRWTG…LYINFTLRRH (240 aa). R105 lines the 4-aminobutanoate pocket. A glycan (N-linked (GlcNAc...) asparagine) is linked at N120. S169 serves as a coordination point for 4-aminobutanoate. Residues C178 and C192 are joined by a disulfide bond. E197 is a 4-aminobutanoate binding site. N-linked (GlcNAc...) asparagine glycosylation is present at N254. The chain crosses the membrane as a helical span at residues 261–281; sequence IFFFLLQTYFPATLMVMLSWV. Residues 282 to 293 lie on the Cytoplasmic side of the membrane; it reads SFWIDHRAVPAR. A helical membrane pass occupies residues 294–314; the sequence is VSLGIMTVLTMSTIITGVNAS. The Extracellular portion of the chain corresponds to 315 to 325; sequence MPRVSYIRAVD. The chain crosses the membrane as a helical span at residues 326–346; sequence IYLWVSFVFVFLSVLEYAAVN. Over 347–443 the chain is Cytoplasmic; it reads YLTTVQEQKE…IFQNTHAIDK (97 aa). The helical transmembrane segment at 444-464 threads the bilayer; sequence YSRLIFPAFYIVFNLIYWSVF. Position 465 (S465) is a topological domain, extracellular.

The protein belongs to the ligand-gated ion channel (TC 1.A.9) family. Gamma-aminobutyric acid receptor (TC 1.A.9.5) subfamily. GABRR2 sub-subfamily. Three rho subunits (rho-1/GBRR1, rho-2/GBRR2 and rho-3/GBRR3) coassemble either to form functional homopentamers or heteropentamers. Rho-2 is unable to form a functional homopentamer. Interacts with SQSTM1. As to expression, expressed in spinal cord and in cerebellum. Expressed in retina.

It is found in the postsynaptic cell membrane. The protein localises to the cell membrane. The catalysed reaction is chloride(in) = chloride(out). With respect to regulation, in contrast with rho-1 and rho-3 homopentamers, rho-2 GABAARs are not inhibited by picrotoxin. In terms of biological role, rho subunit of the pentameric ligand-gated chloride channels responsible for mediating the effects of gamma-aminobutyric acid (GABA), the major inhibitory neurotransmitter in the brain. Rho-containing GABA-gated chloride channels are a subclass of GABA(A) receptors (GABAARs) entirely composed of rho subunits, where GABA molecules bind at the rho intersubunit interfaces. When activated by GABA, rho-GABAARs selectively allow the flow of chloride anions across the cell membrane down their electrochemical gradient. Rho-2 GABAARs may contribute to the regulation of glial development in the cerebellum by controlling extrasynaptic transmission. Rho-2 GABAARs are also involved in neuronal tonic (extrasynaptic) and phasic (synaptic) transmission in the Purkinje neurons of the cerebellum. Rho-2 GABAARs expressed in retina may play a role in retinal neurotransmission. This Rattus norvegicus (Rat) protein is Gamma-aminobutyric acid receptor subunit rho-2.